Reading from the N-terminus, the 336-residue chain is Holliday junction branch migration complex subunit RuvB (336 aa).

Residues 4-184 (ADRLISAGTT…FGIVQRLEFY (181 aa)) form a large ATPase domain (RuvB-L) region. ATP contacts are provided by residues I23, R24, G65, K68, T69, T70, 131–133 (EDY), R174, Y184, and R221. Mg(2+) is bound at residue T69. Residues 185–255 (QVPDLQYIVS…IAAQALDMLN (71 aa)) are small ATPAse domain (RuvB-S). The head domain (RuvB-H) stretch occupies residues 258-336 (AEGFDYMDRK…HFGITPPEMP (79 aa)). DNA contacts are provided by R294, R313, and R318.

This sequence belongs to the RuvB family. As to quaternary structure, homohexamer. Forms an RuvA(8)-RuvB(12)-Holliday junction (HJ) complex. HJ DNA is sandwiched between 2 RuvA tetramers; dsDNA enters through RuvA and exits via RuvB. An RuvB hexamer assembles on each DNA strand where it exits the tetramer. Each RuvB hexamer is contacted by two RuvA subunits (via domain III) on 2 adjacent RuvB subunits; this complex drives branch migration. In the full resolvosome a probable DNA-RuvA(4)-RuvB(12)-RuvC(2) complex forms which resolves the HJ.

Its subcellular location is the cytoplasm. The enzyme catalyses ATP + H2O = ADP + phosphate + H(+). The RuvA-RuvB-RuvC complex processes Holliday junction (HJ) DNA during genetic recombination and DNA repair, while the RuvA-RuvB complex plays an important role in the rescue of blocked DNA replication forks via replication fork reversal (RFR). RuvA specifically binds to HJ cruciform DNA, conferring on it an open structure. The RuvB hexamer acts as an ATP-dependent pump, pulling dsDNA into and through the RuvAB complex. RuvB forms 2 homohexamers on either side of HJ DNA bound by 1 or 2 RuvA tetramers; 4 subunits per hexamer contact DNA at a time. Coordinated motions by a converter formed by DNA-disengaged RuvB subunits stimulates ATP hydrolysis and nucleotide exchange. Immobilization of the converter enables RuvB to convert the ATP-contained energy into a lever motion, pulling 2 nucleotides of DNA out of the RuvA tetramer per ATP hydrolyzed, thus driving DNA branch migration. The RuvB motors rotate together with the DNA substrate, which together with the progressing nucleotide cycle form the mechanistic basis for DNA recombination by continuous HJ branch migration. Branch migration allows RuvC to scan DNA until it finds its consensus sequence, where it cleaves and resolves cruciform DNA. The chain is Holliday junction branch migration complex subunit RuvB from Shigella flexneri serotype 5b (strain 8401).